The sequence spans 194 residues: Large ribosomal subunit protein eL15 (194 aa).

Residues 160 to 194 (RGLTSAGKKGRGLMYKGKGTEKVRPSVRANSKKAK) are disordered.

Belongs to the eukaryotic ribosomal protein eL15 family.

The sequence is that of Large ribosomal subunit protein eL15 from Methanococcus maripaludis (strain C7 / ATCC BAA-1331).